We begin with the raw amino-acid sequence, 113 residues long: U11-theraphotoxin-Hhn1n (113 aa).

The first 21 residues, 1 to 21 (MNTVRVTFLLVFVLAVSLGQA), serve as a signal peptide directing secretion. Residues 22–74 (DKDENRMEMQEKTEQGKSYLDFAENLLLQKLEELEAKLLEEDSEESRNSRQKR) constitute a propeptide that is removed on maturation. Residues 60 to 69 (LEEDSEESRN) show a composition bias toward basic and acidic residues. The disordered stretch occupies residues 60 to 83 (LEEDSEESRNSRQKRCIGEGVPCD). Intrachain disulfides connect Cys75–Cys90 and Cys89–Cys110.

This sequence belongs to the neurotoxin 14 (magi-1) family. 01 (HNTX-16) subfamily. In terms of tissue distribution, expressed by the venom gland.

Its subcellular location is the secreted. Functionally, probable ion channel inhibitor. This is U11-theraphotoxin-Hhn1n from Cyriopagopus hainanus (Chinese bird spider).